Consider the following 99-residue polypeptide: Acylphosphatase-1 (99 aa).

The region spanning 9-99 is the Acylphosphatase-like domain; sequence SVDYEVFGKV…LEHSTFSICK (91 aa). Residues Arg24 and Asn42 contribute to the active site.

It belongs to the acylphosphatase family.

It catalyses the reaction an acyl phosphate + H2O = a carboxylate + phosphate + H(+). The polypeptide is Acylphosphatase-1 (acyp1) (Xenopus laevis (African clawed frog)).